The chain runs to 271 residues: MASLEIIKLEWATPIFKVVEHSQDGLYILLQGQISWQNSSQTYDLDEGNMLFLRRGSYAVRCGTKEPCQLLWIPLPGSFLSTFLHRFGSLLSEIRRDNATPKPLLIFNISPILSQSIQNLCAILERSDFPSVLTQLRIEELLLLLAFSSQGALFLSALRHLGNRPEERLQKFMEENYLQGWKLSKFAREFGMGLTTFKELFGTVYGISPRAWISERRILYAHQLLLNGKMSIVDIAMEAGFSSQSYFTQSYRRRFGCTPSQARLTKIATTG.

Positions E167–T265 constitute an HTH araC/xylS-type domain. 2 consecutive DNA-binding regions (H-T-H motif) follow at residues S184–Y205 and I232–F255.

Its function is as follows. Transcriptional activator of the Yersinia virulence regulon. The protein is Virulence regulon transcriptional activator VirF (virF) of Yersinia enterocolitica.